A 324-amino-acid polypeptide reads, in one-letter code: [Acyl-carrier-protein] phosphodiesterase PptH (324 aa).

Residues aspartate 22, histidine 24, and aspartate 51 each coordinate Mn(2+). Fe cation is bound by residues aspartate 51, asparagine 79, histidine 205, and histidine 246. Histidine 248 provides a ligand contact to Mn(2+).

Belongs to the metallophosphoesterase superfamily. Requires Fe(3+) as cofactor. Mn(2+) serves as cofactor.

It carries out the reaction holo-[ACP] + H2O = apo-[ACP] + (R)-4'-phosphopantetheine + H(+). Its function is as follows. Catalyzes the hydrolysis of the phosphopantetheine group from substrate holo-carrier proteins. This chain is [Acyl-carrier-protein] phosphodiesterase PptH, found in Mycobacterium tuberculosis (strain ATCC 25618 / H37Rv).